The chain runs to 974 residues: UvrABC system protein A (974 aa).

34-41 lines the ATP pocket; sequence GLSGSGKS. ABC transporter domains follow at residues 331-610 and 630-959; these read WARS…TNSL and ISKT…QFLK. Position 663–670 (663–670) interacts with ATP; that stretch reads GVSGGGKS. The C4-type zinc-finger motif lies at 762 to 788; it reads CEACQGDGVIKIEMHFLPDVYVTCDVC.

This sequence belongs to the ABC transporter superfamily. UvrA family. Forms a heterotetramer with UvrB during the search for lesions.

It is found in the cytoplasm. Functionally, the UvrABC repair system catalyzes the recognition and processing of DNA lesions. UvrA is an ATPase and a DNA-binding protein. A damage recognition complex composed of 2 UvrA and 2 UvrB subunits scans DNA for abnormalities. When the presence of a lesion has been verified by UvrB, the UvrA molecules dissociate. The chain is UvrABC system protein A from Brucella suis biovar 1 (strain 1330).